A 322-amino-acid polypeptide reads, in one-letter code: Solute carrier family 35 member B1 (322 aa).

8 helical membrane-spanning segments follow: residues 12-32 (LRLP…GILQ), 51-71 (FALT…KILI), 85-105 (WLYA…NSAL), 136-156 (YPLA…LFMY), 168-188 (TVGF…LTGV), 210-230 (LWST…WEFL), 243-263 (ILLF…TVVY), and 285-305 (VILF…LVFL). A Di-lysine motif motif is present at residues 318–322 (KKTSH).

This sequence belongs to the nucleotide-sugar transporter family. SLC35B subfamily.

It is found in the endoplasmic reticulum membrane. The catalysed reaction is ADP(in) + ATP(out) = ADP(out) + ATP(in). It catalyses the reaction UDP(out) + ATP(in) = UDP(in) + ATP(out). It carries out the reaction UTP(out) + ATP(in) = UTP(in) + ATP(out). The enzyme catalyses dATP(out) + ATP(in) = dATP(in) + ATP(out). Its function is as follows. ATP:ADP antiporter that catalyzes the exchange of ATP and ADP across the endoplasmic reticulum (ER) membrane. Imports ATP from the cytosol to the ER lumen and exports ADP in the opposite direction. Regulates ER energy metabolism and protein biogenesis. Appears to be part of a calcium-dependent ER to cytosol low energy response axis, where calcium efflux from ER to the cytosol triggers ATP import into the ER lumen to maintain sufficient ATP supply. Provides ATP to ER chaperone HSPA5 that drives protein folding and trafficking in the ER. Can transport dATP, UTP or UDP in exchange for ATP, but the physiological relevance of this process remains to be established. This chain is Solute carrier family 35 member B1 (Slc35b1), found in Mus musculus (Mouse).